The chain runs to 235 residues: Effector CFEM1 (235 aa).

The N-terminal stretch at 1–17 (MKFSAPVLAIFLASASA) is a signal peptide. The CFEM domain maps to 18–114 (QSTAELAAQI…ASASASSSAS (97 aa)). 4 cysteine pairs are disulfide-bonded: C30/C72, C34/C67, C44/C51, and C53/C88. Heme is bound at residue D48. T211 is lipidated: GPI-anchor amidated threonine. The propeptide at 212 to 235 (AAGVKEEASFFIPAAVALFAVFAV) is removed in mature form.

Belongs to the RBT5 family.

It localises to the cell membrane. Its subcellular location is the secreted. The protein resides in the host cytoplasm. It is found in the host nucleus. The protein localises to the host cell membrane. Functionally, appears to function during host infection, and may play a role in suppressing the host immune response. The protein is Effector CFEM1 of Marssonina brunnea f. sp. multigermtubi (strain MB_m1) (Marssonina leaf spot fungus).